The following is a 248-amino-acid chain: Deoxyribose-phosphate aldolase (248 aa).

Catalysis depends on Asp117, which acts as the Proton donor/acceptor. Lys179 acts as the Schiff-base intermediate with acetaldehyde in catalysis. Residue Lys208 is the Proton donor/acceptor of the active site.

Belongs to the DeoC/FbaB aldolase family. DeoC type 1 subfamily.

It localises to the cytoplasm. It carries out the reaction 2-deoxy-D-ribose 5-phosphate = D-glyceraldehyde 3-phosphate + acetaldehyde. The protein operates within carbohydrate degradation; 2-deoxy-D-ribose 1-phosphate degradation; D-glyceraldehyde 3-phosphate and acetaldehyde from 2-deoxy-alpha-D-ribose 1-phosphate: step 2/2. Functionally, catalyzes a reversible aldol reaction between acetaldehyde and D-glyceraldehyde 3-phosphate to generate 2-deoxy-D-ribose 5-phosphate. The chain is Deoxyribose-phosphate aldolase from Thermotoga petrophila (strain ATCC BAA-488 / DSM 13995 / JCM 10881 / RKU-1).